A 1078-amino-acid polypeptide reads, in one-letter code: Nonribosomal peptide synthetase aneB (1078 aa).

Positions 20 to 417 (FQQNVLDRPD…HGRKDTQVKI (398 aa)) are adenylation. Residues 559 to 635 (MPTTPLERQM…TLCQHVSVRP (77 aa)) form the Carrier domain. At Ser596 the chain carries O-(pantetheine 4'-phosphoryl)serine. The segment at 699–1013 (NYTLRLDVKL…HEMGYYGPVT (315 aa)) is condensation.

This sequence belongs to the NRP synthetase family.

It catalyses the reaction holo-[peptidyl-carrier protein] + L-proline + ATP = L-prolyl-[peptidyl-carrier protein] + AMP + diphosphate. It functions in the pathway secondary metabolite biosynthesis. Nonribosomal peptide synthetase; part of the gene cluster that mediates the biosynthesis of aculenes, a unique type of norsesquiterpenes that contain a nordaucane skeleton linked to an L-proline moiety and are of mixed biosynthetic origin. The pathway begins with the synthesis of dauca-4,7-diene by the terpene cyclase aneC using farnesyl pyrophosphate (FPP) as substrate. The cytochrome P450 monooxygenase aneF then performs the initial oxidation at C-12 of dauca-4,7-diene to yield asperaculane D. Asperaculane D is substrate of the cytochrome P450 monooxygenase aneD for C-10 hydroxylation to yield asperaculane E. The cytochrome P450 monooxygenase aneG then converts asperaculane E into aculene D via C-2 oxidation. The monomodular nonribosomal peptide synthase aneB adenylates L-proline and the thiohydrolase aneE transfers this activated L-proline derivative to aculenes D and C to produce respectively aculenes B and A. The dioxygenase aneA converts aculene D into aculene C, and aculene B into aculene A by introducing the 5,6-alkene moiety. Asperculanes A, B, C and F, as well as 14-prolyl asperculane C, might be shunt products of the pathway. The protein is Nonribosomal peptide synthetase aneB of Aspergillus aculeatus (strain ATCC 16872 / CBS 172.66 / WB 5094).